We begin with the raw amino-acid sequence, 241 residues long: Probable histone-lysine N-methyltransferase set-23 (241 aa).

The region spanning Gln25–Gly85 is the Pre-SET domain. Positions 27, 29, 33, 39, 41, 64, 68, 70, and 77 each coordinate Zn(2+). One can recognise an SET domain in the interval Lys88–Gly210. S-adenosyl-L-methionine-binding positions include Lys98–Asp100, Asp138, Tyr140, Arg167, and Asn170–His171. The Zn(2+) site is built by Cys173, Cys222, Cys224, and Cys229. In terms of domain architecture, Post-SET spans Asn218–Pro234.

The protein belongs to the class V-like SAM-binding methyltransferase superfamily. Histone-lysine methyltransferase family. Suvar3-9 subfamily.

The protein localises to the nucleus. Its subcellular location is the chromosome. The enzyme catalyses L-lysyl-[histone] + S-adenosyl-L-methionine = N(6)-methyl-L-lysyl-[histone] + S-adenosyl-L-homocysteine + H(+). Functionally, probable histone methyltransferase required for embryonic development. In Caenorhabditis briggsae, this protein is Probable histone-lysine N-methyltransferase set-23.